Consider the following 256-residue polypeptide: Protein FixA (256 aa).

This sequence belongs to the ETF beta-subunit/FixA family. As to quaternary structure, heterodimer of FixA and FixB.

The protein operates within amine and polyamine metabolism; carnitine metabolism. Functionally, required for anaerobic carnitine reduction. May bring reductant to CaiA. The chain is Protein FixA from Escherichia coli O7:K1 (strain IAI39 / ExPEC).